Reading from the N-terminus, the 384-residue chain is Na(+)/H(+) antiporter NhaA (384 aa).

A run of 11 helical transmembrane segments spans residues 9-29 (NLET…IIIA), 58-78 (LLLW…GLEI), 94-114 (LVPA…FIFF), 124-144 (GWAI…SLLG), 153-173 (ILLT…IALF), 179-199 (SLLS…LNYF), 204-224 (ISVF…SGVH), 256-276 (VVFL…FVGL), 285-305 (VVLG…FLSL), 325-345 (VYGI…IGSL), and 357-377 (MVKI…FLVL).

This sequence belongs to the NhaA Na(+)/H(+) (TC 2.A.33) antiporter family.

It is found in the cell inner membrane. The enzyme catalyses Na(+)(in) + 2 H(+)(out) = Na(+)(out) + 2 H(+)(in). Na(+)/H(+) antiporter that extrudes sodium in exchange for external protons. This chain is Na(+)/H(+) antiporter NhaA, found in Legionella pneumophila (strain Lens).